Reading from the N-terminus, the 47-residue chain is Mu-theraphotoxin-An1a (47 aa).

3 disulfides stabilise this stretch: Cys4–Cys34, Cys8–Cys39, and Cys22–Cys44.

Contains 3 disulfide bonds. As to expression, expressed by the venom gland.

It localises to the secreted. Is toxic to insects. Reduces amplitude and frequency of spontaneous firing and inhibits voltage-gated sodium current (Nav) in the dorsal unpaired median (DUM) neurons of P.americana. The protein is Mu-theraphotoxin-An1a of Acanthoscurria natalensis (Tarantula spider).